Reading from the N-terminus, the 370-residue chain is Chaperone protein DnaJ (370 aa).

One can recognise a J domain in the interval 6–70; that stretch reads DFYEILGVSK…QKRANYDQFG (65 aa). Residues 134–216 form a CR-type zinc finger; the sequence is GANKSVTLNV…CHGKGFNTKR (83 aa). 8 residues coordinate Zn(2+): Cys147, Cys150, Cys164, Cys167, Cys190, Cys193, Cys204, and Cys207. 4 CXXCXGXG motif repeats span residues 147–154, 164–171, 190–197, and 204–211; these read CTSCHGSG, CSRCGGTG, CPDCGGSG, and CGECHGKG.

This sequence belongs to the DnaJ family. In terms of assembly, homodimer. Zn(2+) serves as cofactor.

It localises to the cytoplasm. In terms of biological role, participates actively in the response to hyperosmotic and heat shock by preventing the aggregation of stress-denatured proteins and by disaggregating proteins, also in an autonomous, DnaK-independent fashion. Unfolded proteins bind initially to DnaJ; upon interaction with the DnaJ-bound protein, DnaK hydrolyzes its bound ATP, resulting in the formation of a stable complex. GrpE releases ADP from DnaK; ATP binding to DnaK triggers the release of the substrate protein, thus completing the reaction cycle. Several rounds of ATP-dependent interactions between DnaJ, DnaK and GrpE are required for fully efficient folding. Also involved, together with DnaK and GrpE, in the DNA replication of plasmids through activation of initiation proteins. The polypeptide is Chaperone protein DnaJ (Erysipelothrix rhusiopathiae).